Here is a 417-residue protein sequence, read N- to C-terminus: Carboxypeptidase A2 (417 aa).

The signal sequence occupies residues 1–16 (MRLTLLLAALLGYIYC). Positions 17–112 (QETFVGDQVL…EMLFNQQRER (96 aa)) are cleaved as a propeptide — activation peptide. The Peptidase M14 domain occupies 120-412 (AYHTLEEIYQ…LGLKTIMEHV (293 aa)). Zn(2+)-binding residues include histidine 177 and glutamate 180. Substrate contacts are provided by residues 177–180 (HARE), arginine 235, and 252–253 (NR). A disulfide bridge connects residues cysteine 246 and cysteine 269. Histidine 304 is a Zn(2+) binding site. 305–306 (SY) contributes to the substrate binding site. Cysteine 318 and cysteine 352 form a disulfide bridge. Substrate is bound at residue tyrosine 356. The active-site Proton donor/acceptor is glutamate 378.

This sequence belongs to the peptidase M14 family. Zn(2+) serves as cofactor.

Its subcellular location is the secreted. It carries out the reaction Similar to that of carboxypeptidase A (EC 3.4.17.1), but with a preference for bulkier C-terminal residues.. Its function is as follows. Carboxypeptidase that catalyzes the release of a C-terminal amino acid, with a preference for large aromatic C-terminal residues. In Rattus norvegicus (Rat), this protein is Carboxypeptidase A2 (Cpa2).